The chain runs to 377 residues: Histone deacetylase 8 (377 aa).

A histone deacetylase region spans residues 14-324 (LVPVYIYSPE…WTYLTGVILG (311 aa)). The residue at position 39 (S39) is a Phosphoserine. D101 lines the substrate pocket. The Proton acceptor role is filled by H143. G151 is a substrate binding site. Residues D178, H180, and D267 each coordinate a divalent metal cation. Position 306 (Y306) interacts with substrate.

This sequence belongs to the histone deacetylase family. HD type 1 subfamily. As to quaternary structure, interacts with PEPB2-MYH11, a fusion protein consisting of the 165 N-terminal residues of CBF-beta (PEPB2) with the tail region of MYH11 produced by the inversion Inv(16)(p13q22), a translocation associated with acute myeloid leukemia of M4EO subtype. The PEPB2-MYH1 fusion protein also interacts with RUNX1, a well known transcriptional regulator, suggesting that the interaction with HDAC8 may participate in the conversion of RUNX1 into a constitutive transcriptional repressor. Interacts with CBFA2T3. Interacts with phosphorylated SMG5/EST1B; this interaction protects SMG5 from ubiquitin-mediated degradation. Associates with alpha-SMA (smooth muscle alpha-actin). The cofactor is a divalent metal cation. Phosphorylated by PKA on serine 39. Phosphorylation reduces deacetylase activity observed preferentially on histones H3 and H4. As to expression, weakly expressed in most tissues. Expressed at higher level in heart, brain, kidney and pancreas and also in liver, lung, placenta, prostate and kidney.

It is found in the nucleus. It localises to the chromosome. The protein localises to the cytoplasm. It carries out the reaction N(6)-acetyl-L-lysyl-[histone] + H2O = L-lysyl-[histone] + acetate. The enzyme catalyses N(6)-acetyl-L-lysyl-[protein] + H2O = L-lysyl-[protein] + acetate. It catalyses the reaction N(6)-(2E)-butenoyl-L-lysyl-[protein] + H2O = (2E)-2-butenoate + L-lysyl-[protein]. With respect to regulation, its activity is inhibited by trichostatin A (TSA), suberoylanilide hydroxamic acid (SAHA), 3-(1-methyl-4-phenylacetyl-1H-2-pyrrolyl)-N-hydroxy-2-propenamide (APHA), 4-dimethylamino-N-(6-hydroxycarbamoyethyl)benzamide-N-hydroxy-7-(4-dimethylaminobenzoyl)aminoheptanamide (MS-344), 5-(4-methyl-benzoylamino)-biphenyl-3,4'-dicarboxylic acid 3-dimethylamide 4'-hydroxyamide (CRA-A) and butyrate. Functionally, histone deacetylase that catalyzes the deacetylation of lysine residues on the N-terminal part of the core histones (H2A, H2B, H3 and H4). Histone deacetylation gives a tag for epigenetic repression and plays an important role in transcriptional regulation, cell cycle progression and developmental events. Histone deacetylases act via the formation of large multiprotein complexes. Also involved in the deacetylation of cohesin complex protein SMC3 regulating release of cohesin complexes from chromatin. May play a role in smooth muscle cell contractility. In addition to protein deacetylase activity, also has protein-lysine deacylase activity: acts as a protein decrotonylase by mediating decrotonylation ((2E)-butenoyl) of histones. The polypeptide is Histone deacetylase 8 (Homo sapiens (Human)).